We begin with the raw amino-acid sequence, 952 residues long: GATA zinc finger domain-containing protein 5 (952 aa).

2 disordered regions span residues 1–36 (MDYQ…DSPS) and 138–197 (PTPL…SPKQ). The span at 10–24 (QISQEFPTDISTTKS) shows a compositional bias: polar residues. Residues 148 to 157 (SPPPPPPPPA) are compositionally biased toward pro residues. Low complexity predominate over residues 158 to 196 (ATTTTTITTTTTTSAGNSTTKNNNNNNNNNNNNNGKSPK). The GATA-type zinc-finger motif lies at 241-266 (CYQCNTSNTPEWRKGPEGPATLCNAC). 4 disordered regions span residues 380 to 418 (MTPS…HEQP), 433 to 478 (LLSS…GGGG), 634 to 699 (QNNS…NKNN), and 732 to 816 (QQQE…LSVN). Over residues 393-412 (KTTKTKPKPKSKSKPGKITH) the composition is skewed to basic residues. Positions 445–467 (SSSSSCGTSLNSSLGSSSGTITN) are enriched in low complexity. The span at 468-478 (SGGGSSGGGGG) shows a compositional bias: gly residues. The span at 634-653 (QNNSFSGPNDQNPYVPSVSL) shows a compositional bias: polar residues. Low complexity-rich tracts occupy residues 654-668 (NSNK…NNNK), 678-699 (NNKN…NKNN), and 732-745 (QQQE…EQQQ). Residues 746 to 762 (NLSINNSNQTNENEILG) show a composition bias toward polar residues. The span at 763–814 (TTTTTTTSTATIITSQVPMNLSPNSDDNQSSSNYSTLSDSGSSPTDSFSGLS) shows a compositional bias: low complexity.

The polypeptide is GATA zinc finger domain-containing protein 5 (gtaE) (Dictyostelium discoideum (Social amoeba)).